A 143-amino-acid chain; its full sequence is Potassium voltage-gated channel subfamily E regulatory beta subunit 5 (143 aa).

N-linked (GlcNAc...) asparagine glycosylation is found at Asn2 and Asn25. The chain crosses the membrane as a helical span at residues 61-81 (LYILLIMIFYACLAGGLILAY). At 82-143 (TRSRKLVEAK…PALAQGAERV (62 aa)) the chain is on the cytoplasmic side.

Belongs to the potassium channel KCNE family. As to quaternary structure, interacts with KCNQ1; impairs KCNQ1 localization in lipid rafts and only conducts current upon strong and continued depolarization. In terms of tissue distribution, detected in embryonal dorsal root and nerve ganglia, in the somites and in myoepicardial layer of the developing heart wall. Detected at lower levels in the central nervous system (CNS) and in developing limb.

Its subcellular location is the membrane. Functionally, potassium channel ancillary subunit that is essential for generation of some native K(+) currents by virtue of formation of heteromeric ion channel complex with voltage-gated potassium (Kv) channel pore-forming alpha subunits. Functions as an inhibitory beta-subunit of the repolarizing cardiac potassium ion channel KCNQ1. The sequence is that of Potassium voltage-gated channel subfamily E regulatory beta subunit 5 (Kcne5) from Mus musculus (Mouse).